A 214-amino-acid chain; its full sequence is Ribosomal RNA small subunit methyltransferase G (214 aa).

Residues G81, M86, V132 to E133, and R147 contribute to the S-adenosyl-L-methionine site.

Belongs to the methyltransferase superfamily. RNA methyltransferase RsmG family.

The protein localises to the cytoplasm. It catalyses the reaction guanosine(527) in 16S rRNA + S-adenosyl-L-methionine = N(7)-methylguanosine(527) in 16S rRNA + S-adenosyl-L-homocysteine. Its function is as follows. Specifically methylates the N7 position of guanine in position 527 of 16S rRNA. This Pseudomonas fluorescens (strain Pf0-1) protein is Ribosomal RNA small subunit methyltransferase G.